The following is a 473-amino-acid chain: Myocyte-specific enhancer factor 2C (473 aa).

The 55-residue stretch at 3-57 (RKKIQITRIMDERNRQVTFTKRKFGLMKKAYELSVLCDCEIALIIFNSTNKLFQY) folds into the MADS-box domain. An N6-acetyllysine modification is found at Lys-4. The mef2-type DNA-binding region spans 58–86 (ASTDMDKVLLKYTEYNEPHESRTNSDIVE). Ser-59 carries the phosphoserine; by CK2 modification. Residues 91 to 116 (KGLNGCDSPDPDADDSVGHSPESEDK) are disordered. Phosphoserine is present on residues Ser-98, Ser-106, and Ser-110. N6-acetyllysine is present on residues Lys-116 and Lys-119. Positions 180–224 (NSMSPGVTHRPPSAGNTGGLMGGDLTSGAGTSAGNGYGNPRNSPG) are disordered. 2 positions are modified to phosphoserine: Ser-222 and Ser-228. N6-acetyllysine occurs at positions 234 and 239. The residue at position 240 (Ser-240) is a Phosphoserine. N6-acetyllysine occurs at positions 252 and 264. The interval 271 to 278 (SEDVDLLL) is beta domain. Residues Thr-293 and Thr-300 each carry the phosphothreonine; by MAPK14 modification. Residues 368 to 399 (ACTSTHLSQSSNLSLPSTQSLNIKSEPVSPPR) are transcription repressor. The segment covering 375-390 (SQSSNLSLPSTQSLNI) has biased composition (polar residues). The disordered stretch occupies residues 375–473 (SQSSNLSLPS…RMRLSEGWAT (99 aa)). Lys-391 is covalently cross-linked (Glycyl lysine isopeptide (Lys-Gly) (interchain with G-Cter in SUMO)). Ser-396 is subject to Phosphoserine; by CDK5. At Ser-419 the chain carries Phosphoserine; by MAPK7. Residues 419–432 (SPVDSLSSCSSSYD) show a composition bias toward low complexity. Residues 433-443 (GSDREDHRNEF) are compositionally biased toward basic and acidic residues. Ser-445 carries the post-translational modification Phosphoserine.

The protein belongs to the MEF2 family. Forms a complex with class II HDACs in undifferentiating cells. On myogenic differentiation, HDACs are released into the cytoplasm allowing MEF2s to interact with other proteins for activation. Interacts with EP300 in differentiating cells; the interaction acetylates MEF2C leading to increased DNA binding and activation. Interacts with HDAC7 and CARM1. Interacts with HDAC4 and HDAC9; the interaction with HDACs represses transcriptional activity. Interacts with LPIN1. Interacts with MYOCD. Interacts with AKAP13. Interacts with FOXK1; the interaction inhibits MEF2C transactivation activity. Interacts (via N-terminus) with HABP4; this interaction decreases DNA-binding activity of MEF2C in myocardial cells in response to mechanical stress. Interacts with JPH2; interaction specifically takes place with the Junctophilin-2 N-terminal fragment cleavage product of JPH2. Interacts (via MADS box) with SOX18. Interacts with PHF7; the interaction promotes MEF2C binding to its transcription targets. In terms of processing, phosphorylation on Ser-59 enhances DNA binding activity. Phosphorylation on Ser-396 is required for Lys-391 sumoylation and inhibits transcriptional activity. Post-translationally, acetylated by p300 on several sites in diffentiating myocytes. Acetylation on Lys-4 increases DNA binding and transactivation. Sumoylated on Lys-391 with SUMO2 but not by SUMO1 represses transcriptional activity. In terms of processing, proteolytically cleaved in cerebellar granule neurons, probably by caspase 7, following neurotoxicity. Preferentially cleaves the CDK5-mediated hyperphosphorylated form which leads to neuron apoptosis and transcriptional inactivation. Expressed in brain and skeletal muscle.

The protein resides in the nucleus. It localises to the cytoplasm. It is found in the sarcoplasm. Transcription activator which binds specifically to the MEF2 element present in the regulatory regions of many muscle-specific genes. Controls cardiac morphogenesis and myogenesis, and is also involved in vascular development. Enhances transcriptional activation mediated by SOX18. Plays an essential role in hippocampal-dependent learning and memory by suppressing the number of excitatory synapses and thus regulating basal and evoked synaptic transmission. Crucial for normal neuronal development, distribution, and electrical activity in the neocortex. Necessary for proper development of megakaryocytes and platelets and for bone marrow B-lymphopoiesis. Required for B-cell survival and proliferation in response to BCR stimulation, efficient IgG1 antibody responses to T-cell-dependent antigens and for normal induction of germinal center B-cells. May also be involved in neurogenesis and in the development of cortical architecture. Isoforms that lack the repressor domain are more active than isoform 1. In Homo sapiens (Human), this protein is Myocyte-specific enhancer factor 2C.